Consider the following 219-residue polypeptide: Antigen 5 like allergen Cul n 1 (219 aa).

The N-terminal stretch at 1 to 19 (MIKKLSIVILFSCISFVLS) is a signal peptide. 3 cysteine pairs are disulfide-bonded: Cys-23/Cys-45, Cys-28/Cys-124, and Cys-55/Cys-117. Residues 73–211 (LKVHNRLRNK…RHSGNKYFFW (139 aa)) enclose the SCP domain.

It belongs to the CRISP family. Expressed in salivary glands.

It is found in the secreted. The polypeptide is Antigen 5 like allergen Cul n 1 (Culicoides nubeculosus (Biting midge)).